Here is a 118-residue protein sequence, read N- to C-terminus: Aspartate 1-decarboxylase (118 aa).

Ser25 functions as the Schiff-base intermediate with substrate; via pyruvic acid in the catalytic mechanism. Ser25 is modified (pyruvic acid (Ser)). Thr57 serves as a coordination point for substrate. The active-site Proton donor is the Tyr58. Substrate is bound at residue 73-75; sequence GAA.

This sequence belongs to the PanD family. Heterooctamer of four alpha and four beta subunits. Requires pyruvate as cofactor. Post-translationally, is synthesized initially as an inactive proenzyme, which is activated by self-cleavage at a specific serine bond to produce a beta-subunit with a hydroxyl group at its C-terminus and an alpha-subunit with a pyruvoyl group at its N-terminus.

The protein resides in the cytoplasm. The catalysed reaction is L-aspartate + H(+) = beta-alanine + CO2. It participates in cofactor biosynthesis; (R)-pantothenate biosynthesis; beta-alanine from L-aspartate: step 1/1. Its function is as follows. Catalyzes the pyruvoyl-dependent decarboxylation of aspartate to produce beta-alanine. The sequence is that of Aspartate 1-decarboxylase from Phenylobacterium zucineum (strain HLK1).